The following is a 373-amino-acid chain: Dof zinc finger protein 3 (373 aa).

Residues 1 to 23 (MASGGALSPVEEKPTVVKTTKAE) form a disordered region. A compositionally biased stretch (basic and acidic residues) spans 10-23 (VEEKPTVVKTTKAE). The Dof-type zinc-finger motif lies at 45 to 99 (PCCPRCNSIKTKFCYYNNYSMAQPRYFCRECRRYWTQGGSLRNVPVGGGCRKSKR). Zn(2+)-binding residues include Cys47, Cys50, Cys72, and Cys75. The segment at 297–327 (ALGGADEQQGGGDGGEAVMTKDTGGGASSSA) is disordered.

As to quaternary structure, interacts with RISBZ1/BZIP58.

The protein localises to the nucleus. Transcriptional activator that binds specifically to the DNA consensus core sequence 5'-AAAG-3' also known as prolamin box. Can activate the expression of genes encoding for the seed storage proteins glutelin, prolamin and globulin. Functions synergistically with RISBZ/BZIP58 to positively regulate quantitatively many seed storage proteins. Functions synergistically with RISBZ1/BZIP58 to positively regulate some metabolic enzymes, such as alanine aminotransferase and pyruvate phosphate dikinase, that are expressed in developing seeds. Functions synergistically with RISBZ1/BZIP58 to positively regulate genes that are key players in the development of aleurone layers. Functions synergistically with RISBZ1/BZIP58 to positively regulate the glutelin GLUD-1 gene in endosperm of developing seeds. Can activate the expression of the bifunctional lysine-degrading enzyme, lysine ketoglutarate reductase/saccharopine dehydrogenase (LKR/SDH), one of the key regulators determining free lysine content in plants. In germinating seeds, involved in the gibberellin-mediated activation of the alpha-amylase AMY1.1/AMY1A gene. The sequence is that of Dof zinc finger protein 3 from Oryza sativa subsp. japonica (Rice).